The primary structure comprises 138 residues: Large ribosomal subunit protein bL19 (138 aa).

This sequence belongs to the bacterial ribosomal protein bL19 family.

This protein is located at the 30S-50S ribosomal subunit interface and may play a role in the structure and function of the aminoacyl-tRNA binding site. The chain is Large ribosomal subunit protein bL19 from Rickettsia akari (strain Hartford).